The primary structure comprises 167 residues: Methylated-DNA--protein-cysteine methyltransferase (167 aa).

Catalysis depends on cysteine 128, which acts as the Nucleophile; methyl group acceptor.

It belongs to the MGMT family.

The protein localises to the cytoplasm. It catalyses the reaction a 6-O-methyl-2'-deoxyguanosine in DNA + L-cysteinyl-[protein] = S-methyl-L-cysteinyl-[protein] + a 2'-deoxyguanosine in DNA. It carries out the reaction a 4-O-methyl-thymidine in DNA + L-cysteinyl-[protein] = a thymidine in DNA + S-methyl-L-cysteinyl-[protein]. Its function is as follows. Involved in the cellular defense against the biological effects of O6-methylguanine (O6-MeG) and O4-methylthymine (O4-MeT) in DNA. Repairs the methylated nucleobase in DNA by stoichiometrically transferring the methyl group to a cysteine residue in the enzyme. This is a suicide reaction: the enzyme is irreversibly inactivated. The chain is Methylated-DNA--protein-cysteine methyltransferase from Methanocaldococcus jannaschii (strain ATCC 43067 / DSM 2661 / JAL-1 / JCM 10045 / NBRC 100440) (Methanococcus jannaschii).